Here is a 200-residue protein sequence, read N- to C-terminus: Nucleoside triphosphate pyrophosphatase (200 aa).

The Proton acceptor role is filled by Asp79.

It belongs to the Maf family. A divalent metal cation serves as cofactor.

It is found in the cytoplasm. The enzyme catalyses a ribonucleoside 5'-triphosphate + H2O = a ribonucleoside 5'-phosphate + diphosphate + H(+). It carries out the reaction a 2'-deoxyribonucleoside 5'-triphosphate + H2O = a 2'-deoxyribonucleoside 5'-phosphate + diphosphate + H(+). Nucleoside triphosphate pyrophosphatase. May have a dual role in cell division arrest and in preventing the incorporation of modified nucleotides into cellular nucleic acids. In Legionella pneumophila (strain Corby), this protein is Nucleoside triphosphate pyrophosphatase.